The primary structure comprises 222 residues: Dihydrophenazinedicarboxylate synthase (222 aa).

Ser-18 contributes to the substrate binding site. Residues Arg-73–Val-76 and Ser-88–Thr-89 contribute to the FMN site. His-90 lines the substrate pocket. FMN contacts are provided by residues Gln-94–Lys-95 and Gln-117. Substrate-binding residues include Arg-139 and Ser-147. FMN contacts are provided by residues Gln-152–Ser-153 and Arg-205.

Belongs to the pyridoxamine 5'-phosphate oxidase family. FMN is required as a cofactor.

The catalysed reaction is (1R,6R)-1,4,5,5a,6,9-hexahydrophenazine-1,6-dicarboxylate + O2 = (1R,10aS)-1,4,10,10a-tetrahydrophenazine-1,6-dicarboxylate + H2O2. It catalyses the reaction (1R,10aS)-1,4,10,10a-tetrahydrophenazine-1,6-dicarboxylate + O2 = (5aS)-5,5a-dihydrophenazine-1,6-dicarboxylate + H2O2. It carries out the reaction (1R,10aS)-1,4,10,10a-tetrahydrophenazine-1-carboxylate + O2 = (10aS)-10,10a-dihydrophenazine-1-carboxylate + H2O2. The enzyme catalyses (1R)-1,4,5,10-tetrahydrophenazine-1-carboxylate + O2 = (10aS)-10,10a-dihydrophenazine-1-carboxylate + H2O2. It participates in antibiotic biosynthesis; phenazine biosynthesis. In terms of biological role, involved in the biosynthesis of the antibiotic phenazine, a nitrogen-containing heterocyclic molecule having important roles in virulence, competition and biological control. Catalyzes several oxidations in the terminal steps of core phenazine biosynthesis. It oxidizes both hexahydrophenazine-1,6-dicarboxylic acid (HHPDC) and tetrahydrophenazine-1-carboxylic acid (THPCA) and thereby contributes to the generation of both phenazine-1,6-dicarboxylic acid (PDC) and phenazine-1-carboxylic acid (PCA). This chain is Dihydrophenazinedicarboxylate synthase, found in Pseudomonas chlororaphis (Pseudomonas aureofaciens).